Consider the following 146-residue polypeptide: Histone H2B (146 aa).

The segment covering 1 to 16 has biased composition (basic and acidic residues); it reads MAPRADKKPAEKKPGA. A disordered region spans residues 1-52; it reads MAPRADKKPAEKKPGAEKTPVAEKAPAEKKPRAGKKLPRDAGAAGDKKKKRA. An N6-acetyllysine mark is found at K7, K35, and K36. K142 is covalently cross-linked (Glycyl lysine isopeptide (Lys-Gly) (interchain with G-Cter in ubiquitin)).

The protein belongs to the histone H2B family. As to quaternary structure, the nucleosome is a histone octamer containing two molecules each of H2A, H2B, H3 and H4 assembled in one H3-H4 heterotetramer and two H2A-H2B heterodimers. The octamer wraps approximately 147 bp of DNA. Can be acetylated to form H2BK6ac, H2BK33ac and H2BK34ac. In terms of processing, monoubiquitinated to form H2BK143ub1; may give a specific tag for epigenetic transcriptional activation.

It localises to the nucleus. The protein resides in the chromosome. Its function is as follows. Core component of nucleosome. Nucleosomes wrap and compact DNA into chromatin, limiting DNA accessibility to the cellular machineries which require DNA as a template. Histones thereby play a central role in transcription regulation, DNA repair, DNA replication and chromosomal stability. DNA accessibility is regulated via a complex set of post-translational modifications of histones, also called histone code, and nucleosome remodeling. The sequence is that of Histone H2B (HIS2B) from Nicotiana tabacum (Common tobacco).